The following is a 350-amino-acid chain: Glycerol-3-phosphate dehydrogenase [NAD(+)], cytoplasmic (350 aa).

Residues 11–16 (GSGNWG), phenylalanine 98, lysine 121, and alanine 155 contribute to the NAD(+) site. A substrate-binding site is contributed by lysine 121. The Proton acceptor role is filled by lysine 206. The NAD(+) site is built by arginine 270 and glutamine 299. 270–271 (RN) contributes to the substrate binding site.

It belongs to the NAD-dependent glycerol-3-phosphate dehydrogenase family. In terms of assembly, homodimer.

It is found in the cytoplasm. It catalyses the reaction sn-glycerol 3-phosphate + NAD(+) = dihydroxyacetone phosphate + NADH + H(+). It functions in the pathway phospholipid metabolism; alpha-glycerophosphate cycle. This Drosophila ezoana (Fruit fly) protein is Glycerol-3-phosphate dehydrogenase [NAD(+)], cytoplasmic (Gpdh1).